Reading from the N-terminus, the 250-residue chain is DNA repair protein RecO (250 aa).

Belongs to the RecO family.

In terms of biological role, involved in DNA repair and RecF pathway recombination. The protein is DNA repair protein RecO of Syntrophobacter fumaroxidans (strain DSM 10017 / MPOB).